A 93-amino-acid chain; its full sequence is Small ribosomal subunit protein mS33 (93 aa).

Belongs to the mitochondrion-specific ribosomal protein mS33 family. Component of the mitochondrial small ribosomal subunit (mt-SSU). Mature yeast 74S mitochondrial ribosomes consist of a small (37S) and a large (54S) subunit. The 37S small subunit contains a 15S ribosomal RNA (15S mt-rRNA) and at least 32 different proteins. The 54S large subunit contains a 21S rRNA (21S mt-rRNA) and at least 45 different proteins.

It is found in the mitochondrion. Component of the mitochondrial ribosome (mitoribosome), a dedicated translation machinery responsible for the synthesis of mitochondrial genome-encoded proteins, including at least some of the essential transmembrane subunits of the mitochondrial respiratory chain. The mitoribosomes are attached to the mitochondrial inner membrane and translation products are cotranslationally integrated into the membrane. This chain is Small ribosomal subunit protein mS33 (rsm27), found in Schizosaccharomyces pombe (strain 972 / ATCC 24843) (Fission yeast).